Reading from the N-terminus, the 87-residue chain is Retinal rod rhodopsin-sensitive cGMP 3',5'-cyclic phosphodiesterase subunit gamma (87 aa).

Met-1 carries the N-acetylmethionine modification. Positions 1 to 12 are enriched in basic and acidic residues; that stretch reads MNLEPPKAEIRS. Residues 1-55 form a disordered region; it reads MNLEPPKAEIRSATRVIGGPVTPRKGPPKFKQRQTRQFKSKPPKKGVQGFGDDIP. Residues 26–44 are compositionally biased toward basic residues; that stretch reads GPPKFKQRQTRQFKSKPPK.

This sequence belongs to the rod/cone cGMP-PDE gamma subunit family. Oligomer composed of two catalytic chains (alpha and beta), an inhibitory chain (gamma) and the delta chain.

It carries out the reaction 3',5'-cyclic GMP + H2O = GMP + H(+). Participates in processes of transmission and amplification of the visual signal. cGMP-PDEs are the effector molecules in G-protein-mediated phototransduction in vertebrate rods and cones. This is Retinal rod rhodopsin-sensitive cGMP 3',5'-cyclic phosphodiesterase subunit gamma (PDE6G) from Canis lupus familiaris (Dog).